The chain runs to 537 residues: Caspase recruitment domain-containing protein 8 (537 aa).

Residues 1–23 are compositionally biased toward basic and acidic residues; that stretch reads MEKKECPEKSSSSEEELPRRDSG. Disordered regions lie at residues 1-28 and 113-133; these read MEKK…SRNI and GDIP…SGDI. The segment at 161–296 is ZU5; that stretch reads FLGPEGNVDV…FYAVLESPSF (136 aa). One can recognise an FIIND domain in the interval 161–446; the sequence is FLGPEGNVDV…LQLVAASAPP (286 aa). The UPA stretch occupies residues 297 to 446; it reads SLMGILLRIA…LQLVAASAPP (150 aa). The region spanning 446-536 is the CARD domain; that stretch reads PPFSGAAFVK…YLVSYLRQQN (91 aa).

In terms of assembly, interacts with DPP9; leading to inhibit activation of the inflammasome. DPP9 acts via formation of a ternary complex, composed of a DPP9 homodimer, one full-length CARD8 protein, and one cleaved C-terminus of CARD8 (Caspase recruitment domain-containing protein 8, C-terminus). Interacts with DPP8; leading to inhibit activation of the inflammasome, probably via formation of a ternary complex with DPP8. Interacts with NLRP3. Interacts with IKBKG/NEMO. Interacts with DRAL. Binds to caspase-1 (CASP1), CARD16/pseudo-ICE and CARD18/ICEBERG. Interacts with NLRP2 (via NACHT domain). As to quaternary structure, interacts with the C-terminal part of CARD8 (Caspase recruitment domain-containing protein 8, C-terminus) in absence of pathogens and other damage-associated signals. Interacts with the N-terminal part of CARD8 (Caspase recruitment domain-containing protein 8, N-terminus) in absence of pathogens and other damage-associated signals. Homomultimer; forms the CARD8 inflammasome polymeric complex, a filament composed of homopolymers of this form in response to pathogens and other damage-associated signals. The CARD8 inflammasome polymeric complex directly recruits pro-caspase-1 (proCASP1) independently of PYCARD/ASC. Interacts (via CARD domain) with CASP1 (via CARD domain); leading to CASP1 activation. In terms of processing, undergoes autocatalytic processing within the FIIND domain to generate the N-terminal and C-terminal parts, which are associated non-covalently in absence of pathogens and other damage-associated signals. Ubiquitinated by the N-end rule pathway in response to pathogens and other damage-associated signals, leading to its degradation by the proteasome and subsequent release of the cleaved C-terminal part of the protein (Caspase recruitment domain-containing protein 8, C-terminus), which polymerizes and forms the CARD8 inflammasome. Post-translationally, (Microbial infection) Proteolytic cleavage by HIV-1 protease in the disordered region and within the ZU5 region of the FIIND domain promotes ubiquitination of the N-terminal part by the N-end rule pathway and degradation by the proteasome, releasing the cleaved C-terminal part of the protein (Caspase recruitment domain-containing protein 8, C-terminus), which polymerizes and forms the CARD8 inflammasome. In terms of processing, undergoes less autocatalytic processing within the FIIND domain compared to isoform 5. As to expression, high expression in lung, ovary, testis and placenta. Lower expression in heart, kidney and liver. Also expressed in spleen, lymph node and bone marrow.

The protein localises to the cytoplasm. Its subcellular location is the nucleus. The protein resides in the inflammasome. CARD8 inflammasome is activated by HIV-1 protease activity: HIV-1 protease cleaves CARD8, promoting ubiquitination and degradation of the N-terminal part, releasing the cleaved C-terminal part of the protein (Caspase recruitment domain-containing protein 8, C-terminus), which polymerizes and forms the CARD8 inflammasome. CARD8 inflammasome is inhibited by DPP8 and DPP9, which sequester the C-terminal fragment of CARD8 (Caspase recruitment domain-containing protein 8, C-terminus) in a ternary complex, thereby preventing CARD8 oligomerization and activation. CARD8 inflammasome is activated by Val-boroPro (Talabostat, PT-100), an inhibitor of dipeptidyl peptidases DPP8 and DPP9. Val-boroPro relieves inhibition of DPP8 and/or DPP9 by inducing the proteasome-mediated destruction of the N-terminal part of CARD8, releasing its C-terminal part from autoinhibition. Indirectly activated by the pseudodipeptide CQ31. CQ31 directly inactivates the peptidases PEPD and XPNPEP1, leading to an accumulation of dipeptides that weaky inhibit DDP8 and DPP9, relieving DPP8- and/or DPP9-mediated inhibition of CARD8. In terms of biological role, inflammasome sensor, which mediates inflammasome activation in response to various pathogen-associated signals, leading to subsequent pyroptosis of CD4(+) T-cells and macrophages. Inflammasomes are supramolecular complexes that assemble in the cytosol in response to pathogens and other damage-associated signals and play critical roles in innate immunity and inflammation. Acts as a recognition receptor (PRR): recognizes specific pathogens and other damage-associated signals, such as HIV-1 protease activity or Val-boroPro inhibitor, and mediates CARD8 inflammasome activation. In response to pathogen-associated signals, the N-terminal part of CARD8 is degraded by the proteasome, releasing the cleaved C-terminal part of the protein (Caspase recruitment domain-containing protein 8, C-terminus), which polymerizes to initiate the formation of the inflammasome complex: the CARD8 inflammasome directly recruits pro-caspase-1 (proCASP1) independently of PYCARD/ASC and promotes caspase-1 (CASP1) activation, which subsequently cleaves and activates inflammatory cytokines IL1B and IL18 and gasdermin-D (GSDMD), leading to pyroptosis. Ability to sense HIV-1 protease activity leads to the clearance of latent HIV-1 in patient CD4(+) T-cells after viral reactivation; in contrast, HIV-1 can evade CARD8-sensing when its protease remains inactive in infected cells prior to viral budding. Also acts as a negative regulator of the NLRP3 inflammasome. May also act as an inhibitor of NF-kappa-B activation. Functionally, constitutes the precursor of the CARD8 inflammasome, which mediates autoproteolytic processing within the FIIND domain to generate the N-terminal and C-terminal parts, which are associated non-covalently in absence of pathogens and other damage-associated signals. Regulatory part that prevents formation of the CARD8 inflammasome: in absence of pathogens and other damage-associated signals, interacts with the C-terminal part of CARD8 (Caspase recruitment domain-containing protein 8, C-terminus), preventing activation of the CARD8 inflammasome. In response to pathogen-associated signals, this part is ubiquitinated by the N-end rule pathway and degraded by the proteasome, releasing the cleaved C-terminal part of the protein, which polymerizes and forms the CARD8 inflammasome. Its function is as follows. Constitutes the active part of the CARD8 inflammasome. In absence of pathogens and other damage-associated signals, interacts with the N-terminal part of CARD8 (Caspase recruitment domain-containing protein 8, N-terminus), preventing activation of the CARD8 inflammasome. In response to pathogen-associated signals, the N-terminal part of CARD8 is degraded by the proteasome, releasing this form, which polymerizes to form the CARD8 inflammasome complex: the CARD8 inflammasome complex then directly recruits pro-caspase-1 (proCASP1) and promotes caspase-1 (CASP1) activation, leading to gasdermin-D (GSDMD) cleavage and subsequent pyroptosis. In Homo sapiens (Human), this protein is Caspase recruitment domain-containing protein 8.